The following is a 155-amino-acid chain: uncharacterized protein (155 aa).

The N-acetyltransferase domain maps to 6-155; sequence LRIELGEETN…RDMVRLYLDL (150 aa). CoA contacts are provided by residues 69 to 71, 77 to 82, and 111 to 117; these read IAV, KKGFGK, and QLSLYQK.

Functionally, probable N-acetyltransferase. This is an uncharacterized protein from Bacillus subtilis (strain 168).